The chain runs to 227 residues: Probable 2-phosphosulfolactate phosphatase (227 aa).

The protein belongs to the ComB family. Requires Mg(2+) as cofactor.

It catalyses the reaction (2R)-O-phospho-3-sulfolactate + H2O = (2R)-3-sulfolactate + phosphate. The chain is Probable 2-phosphosulfolactate phosphatase from Thermotoga petrophila (strain ATCC BAA-488 / DSM 13995 / JCM 10881 / RKU-1).